The primary structure comprises 82 residues: Exodeoxyribonuclease 7 small subunit (82 aa).

The protein belongs to the XseB family. As to quaternary structure, heterooligomer composed of large and small subunits.

It is found in the cytoplasm. It catalyses the reaction Exonucleolytic cleavage in either 5'- to 3'- or 3'- to 5'-direction to yield nucleoside 5'-phosphates.. In terms of biological role, bidirectionally degrades single-stranded DNA into large acid-insoluble oligonucleotides, which are then degraded further into small acid-soluble oligonucleotides. This Mycobacterium marinum (strain ATCC BAA-535 / M) protein is Exodeoxyribonuclease 7 small subunit.